A 450-amino-acid polypeptide reads, in one-letter code: Phosphoglucosamine mutase (450 aa).

Ser101 (phosphoserine intermediate) is an active-site residue. 4 residues coordinate Mg(2+): Ser101, Asp241, Asp243, and Asp245. Ser101 carries the phosphoserine modification.

This sequence belongs to the phosphohexose mutase family. Mg(2+) is required as a cofactor. In terms of processing, activated by phosphorylation.

The enzyme catalyses alpha-D-glucosamine 1-phosphate = D-glucosamine 6-phosphate. Functionally, catalyzes the conversion of glucosamine-6-phosphate to glucosamine-1-phosphate. This chain is Phosphoglucosamine mutase, found in Listeria monocytogenes serovar 1/2a (strain ATCC BAA-679 / EGD-e).